Reading from the N-terminus, the 115-residue chain is Large ribosomal subunit protein P2z (115 aa).

Residues 62-115 (LASVPSGGGGGVAVASATSGGGGGGGAPAAESKKEEKKEEKEESDDDMGFSLFE) form a disordered region. Residues 92–102 (ESKKEEKKEEK) show a composition bias toward basic and acidic residues. The residue at position 105 (Ser105) is a Phosphoserine.

This sequence belongs to the eukaryotic ribosomal protein P1/P2 family. In terms of assembly, P1 and P2 exist as dimers at the large ribosomal subunit. Phosphorylated.

Plays an important role in the elongation step of protein synthesis. The sequence is that of Large ribosomal subunit protein P2z (RPP2A) from Arabidopsis thaliana (Mouse-ear cress).